Here is a 248-residue protein sequence, read N- to C-terminus: Probable capsular polysaccharide biosynthesis protein YwqC (248 aa).

A run of 2 helical transmembrane segments spans residues Ile18 to Phe38 and Leu174 to Leu194.

Belongs to the CpsC/CapA family. Post-translationally, not phosphorylated in vitro by YwqD.

It is found in the cell membrane. The protein operates within capsule biogenesis; capsule polysaccharide biosynthesis. In terms of biological role, required for YwqD kinase activity. May bring YwqD and its substrates into contact. Probably involved in the regulation of capsular polysaccharide biosynthesis. This Bacillus subtilis (strain 168) protein is Probable capsular polysaccharide biosynthesis protein YwqC (ywqC).